Here is a 145-residue protein sequence, read N- to C-terminus: Basic phospholipase A2 beta-bungarotoxin A2 chain (145 aa).

The signal sequence occupies residues 1–17 (MLIFLWCGAVCVSLLGA). Positions 18-25 (ANIPPHPL) are excised as a propeptide. Cystine bridges form between Cys-52–Cys-144, Cys-54–Cys-70, Cys-69–Cys-125, Cys-76–Cys-118, Cys-86–Cys-111, and Cys-104–Cys-116. Ca(2+) is bound by residues Tyr-53, Gly-55, and Gly-57. Residue His-73 is part of the active site. Ca(2+) is bound at residue Asp-74. Asp-119 is a catalytic residue.

This sequence belongs to the phospholipase A2 family. Group I subfamily. D49 sub-subfamily. Heterodimer; disulfide-linked. The A chains have phospholipase A2 activity and the B chains show homology with the basic protease inhibitors. The A2 chain is found in beta-3 and beta-4 bungarotoxins. The cofactor is Ca(2+). Expressed by the venom gland.

Its subcellular location is the secreted. The enzyme catalyses a 1,2-diacyl-sn-glycero-3-phosphocholine + H2O = a 1-acyl-sn-glycero-3-phosphocholine + a fatty acid + H(+). In terms of biological role, snake venom phospholipase A2 (PLA2) that inhibits neuromuscular transmission by blocking acetylcholine release from the nerve termini. PLA2 catalyzes the calcium-dependent hydrolysis of the 2-acyl groups in 3-sn-phosphoglycerides. This chain is Basic phospholipase A2 beta-bungarotoxin A2 chain, found in Bungarus multicinctus (Many-banded krait).